Reading from the N-terminus, the 109-residue chain is Nucleoid-associated protein PC1_1077 (109 aa).

It belongs to the YbaB/EbfC family. Homodimer.

It is found in the cytoplasm. Its subcellular location is the nucleoid. In terms of biological role, binds to DNA and alters its conformation. May be involved in regulation of gene expression, nucleoid organization and DNA protection. The chain is Nucleoid-associated protein PC1_1077 from Pectobacterium carotovorum subsp. carotovorum (strain PC1).